Here is a 1188-residue protein sequence, read N- to C-terminus: Zinc finger SWIM domain-containing protein 5 (1188 aa).

A compositionally biased stretch (basic and acidic residues) spans 1–10 (MAEGGEREEL). 2 disordered regions span residues 1-46 (MAEG…GAGG) and 123-171 (AGAA…TGTA). Composition is skewed to low complexity over residues 126–136 (AAGAAGASPVE) and 146–155 (AAPAGSAPGA). The span at 156 to 171 (AGAGSSPGLGAGTGTA) shows a compositional bias: gly residues. Residues 222-259 (YKVAISFDRCKITSVSCGCGNKDIFYCAHVVALSLYRI) form an SWIM-type zinc finger.

This chain is Zinc finger SWIM domain-containing protein 5 (Zswim5), found in Mus musculus (Mouse).